Here is a 1392-residue protein sequence, read N- to C-terminus: ATP-dependent helicase/nuclease subunit A (1392 aa).

Positions 3–489 constitute a UvrD-like helicase ATP-binding domain; it reads NPKWTPAQQA…IDLNQNFRSR (487 aa). Residue 24-31 participates in ATP binding; the sequence is AAAGSGKT. Disordered stretches follow at residues 291 to 319, 556 to 594, and 1051 to 1126; these read RGSK…KARD, RGAE…LEEA, and GPVQ…LDTK. Composition is skewed to basic and acidic residues over residues 305-319 and 569-583; these read ENSK…KARD and AKGE…REPE. The region spanning 556–886 is the UvrD-like helicase C-terminal domain; it reads RGAEDAATGA…RFITVHSSKG (331 aa). Positions 584–594 are enriched in acidic residues; the sequence is SGDDESSLEEA. The span at 1088–1113 shows a compositional bias: basic and acidic residues; the sequence is ASGKTEIPGETKNSEETKTSEDKKNL.

This sequence belongs to the helicase family. AddA subfamily. Heterodimer of AddA and AddB/RexB. The cofactor is Mg(2+).

It carries out the reaction Couples ATP hydrolysis with the unwinding of duplex DNA by translocating in the 3'-5' direction.. The catalysed reaction is ATP + H2O = ADP + phosphate + H(+). In terms of biological role, the heterodimer acts as both an ATP-dependent DNA helicase and an ATP-dependent, dual-direction single-stranded exonuclease. Recognizes the chi site generating a DNA molecule suitable for the initiation of homologous recombination. The AddA nuclease domain is required for chi fragment generation; this subunit has the helicase and 3' -&gt; 5' nuclease activities. The sequence is that of ATP-dependent helicase/nuclease subunit A from Desulfitobacterium hafniense (strain Y51).